Consider the following 111-residue polypeptide: Ig kappa chain V-III region PC 7940 (111 aa).

The tract at residues 1–23 (DIVLTQSPASLAVSLGQRATISC) is framework-1. A disulfide bridge connects residues cysteine 23 and cysteine 92. A complementarity-determining-1 region spans residues 24-38 (RASKSVSAFGYSYMH). The segment at 39 to 53 (WYQQKPGQPPKLLIY) is framework-2. Residues 54–60 (LASNLES) form a complementarity-determining-2 region. The segment at 61–92 (GVPARFSGSGSGTDFTLNIHPVEEEDAVTYYC) is framework-3. The tract at residues 93 to 101 (QHSRELPPT) is complementarity-determining-3. The tract at residues 102 to 111 (FGGGTKLEIK) is framework-4.

This chain is Ig kappa chain V-III region PC 7940, found in Mus musculus (Mouse).